The following is a 249-amino-acid chain: Triosephosphate isomerase (249 aa).

The substrate site is built by Asn12 and Lys14. N6-acetyllysine is present on Lys14. Tyr68 bears the 3'-nitrotyrosine mark. Ser80 carries the post-translational modification Phosphoserine. His96 functions as the Electrophile in the catalytic mechanism. Residue Ser106 is modified to Phosphoserine. A Glycyl lysine isopeptide (Lys-Gly) (interchain with G-Cter in SUMO1) cross-link involves residue Lys142. Residue Lys149 is modified to N6-succinyllysine. Lys156 bears the N6-acetyllysine; alternate mark. Lys156 is subject to N6-succinyllysine; alternate. Ser159 carries the phosphoserine modification. The active-site Proton acceptor is the Glu166. Thr173 carries the phosphothreonine modification. Residue Lys194 is modified to N6-acetyllysine; alternate. Lys194 carries the post-translational modification N6-succinyllysine; alternate. Lys194 bears the N6-methyllysine; alternate mark. Ser198 carries the post-translational modification Phosphoserine. Tyr209 is modified (3'-nitrotyrosine). Ser212 carries the phosphoserine modification. Phosphothreonine is present on Thr214. The residue at position 223 (Ser223) is a Phosphoserine. An N6-acetyllysine modification is found at Lys238.

It belongs to the triosephosphate isomerase family. As to quaternary structure, homodimer.

It localises to the cytoplasm. It catalyses the reaction dihydroxyacetone phosphate = methylglyoxal + phosphate. The enzyme catalyses D-glyceraldehyde 3-phosphate = dihydroxyacetone phosphate. It participates in carbohydrate degradation; glycolysis; D-glyceraldehyde 3-phosphate from glycerone phosphate: step 1/1. Its pathway is carbohydrate biosynthesis; gluconeogenesis. Triosephosphate isomerase is an extremely efficient metabolic enzyme that catalyzes the interconversion between dihydroxyacetone phosphate (DHAP) and D-glyceraldehyde-3-phosphate (G3P) in glycolysis and gluconeogenesis. Functionally, it is also responsible for the non-negligible production of methylglyoxal a reactive cytotoxic side-product that modifies and can alter proteins, DNA and lipids. The chain is Triosephosphate isomerase (TPI1) from Pongo abelii (Sumatran orangutan).